Consider the following 340-residue polypeptide: Outer membrane protein B (340 aa).

Residues 1 to 26 (MSSKLVNYLRLTFLSFLGIASTSLDA) form the signal peptide.

The protein belongs to the chlamydial OMP family.

It is found in the cell outer membrane. The polypeptide is Outer membrane protein B (ompB) (Chlamydia trachomatis serovar D (strain ATCC VR-885 / DSM 19411 / UW-3/Cx)).